Here is a 325-residue protein sequence, read N- to C-terminus: Beta-ketoacyl-[acyl-carrier-protein] synthase III (325 aa).

Residues Cys113 and His250 contribute to the active site. Residues 251 to 255 (QANIR) form an ACP-binding region. The active site involves Asn280.

It belongs to the thiolase-like superfamily. FabH family. As to quaternary structure, homodimer.

It localises to the cytoplasm. The catalysed reaction is malonyl-[ACP] + acetyl-CoA + H(+) = 3-oxobutanoyl-[ACP] + CO2 + CoA. Its pathway is lipid metabolism; fatty acid biosynthesis. Functionally, catalyzes the condensation reaction of fatty acid synthesis by the addition to an acyl acceptor of two carbons from malonyl-ACP. Catalyzes the first condensation reaction which initiates fatty acid synthesis and may therefore play a role in governing the total rate of fatty acid production. Possesses both acetoacetyl-ACP synthase and acetyl transacylase activities. Its substrate specificity determines the biosynthesis of branched-chain and/or straight-chain of fatty acids. The protein is Beta-ketoacyl-[acyl-carrier-protein] synthase III of Streptococcus suis (strain 98HAH33).